We begin with the raw amino-acid sequence, 347 residues long: Cannabinoid receptor 2 (347 aa).

Residues 1-33 (MEGCRETEVTNGSNGGLEFNPMKEYMILSSGQQ) are Extracellular-facing. Asn-11 is a glycosylation site (N-linked (GlcNAc...) asparagine). Residues 34–59 (IAVAVLCTLMGLLSALENMAVLYIIL) traverse the membrane as a helical segment. Residues 60-71 (SSRRLRRKPSYL) are Cytoplasmic-facing. A helical transmembrane segment spans residues 72-92 (FISSLAGADFLASVIFACNFV). Over 93 to 104 (IFHVFHGVDSNA) the chain is Extracellular. The helical transmembrane segment at 105–129 (IFLLKIGSVTMTFTASVGSLLLTAV) threads the bilayer. Residues 130–149 (DRYLCLCYPPTYKALVTRGR) lie on the Cytoplasmic side of the membrane. A helical transmembrane segment spans residues 150-172 (ALVALCVMWVLSALISYLPLMGW). The Extracellular portion of the chain corresponds to 173 to 188 (TCCPSPCSELFPLIPN). Residues 189–214 (DYLLGWLLFIAILFSGIIYTYGYVLW) traverse the membrane as a helical segment. Residues 215 to 246 (KAHRHVATLAEHQDRQVPGIARMRLDVRLAKT) are Cytoplasmic-facing. The helical transmembrane segment at 247 to 267 (LGLVLAVLLICWFPALALMGH) threads the bilayer. Residues 268–279 (SLVTTLSDQVKE) lie on the Extracellular side of the membrane. The chain crosses the membrane as a helical span at residues 280–301 (AFAFCSMLCLVNSMVNPIIYAL). At 302–347 (RSGEIRSAAQHCLIGWKKYLQGLGPEGKEEGPRSSVTETEADVKTT) the chain is on the cytoplasmic side. The interval 326-347 (PEGKEEGPRSSVTETEADVKTT) is disordered. A phosphoserine mark is found at Ser-335 and Ser-336. The residue at position 338 (Thr-338) is a Phosphothreonine.

Belongs to the G-protein coupled receptor 1 family. Expressed by cells of hematopoietic origin. Expressed in skin in suprabasal layers and hair follicles, in brain by neurons and glial cells and by osteoblasts, osteocytes, osteoclasts (at protein level).

It is found in the cell membrane. The protein localises to the cell projection. Its subcellular location is the dendrite. The protein resides in the perikaryon. In terms of biological role, heterotrimeric G protein-coupled receptor for endocannabinoid 2-arachidonoylglycerol mediating inhibition of adenylate cyclase. May function in inflammatory response, nociceptive transmission and bone homeostasis. The sequence is that of Cannabinoid receptor 2 (Cnr2) from Mus musculus (Mouse).